The chain runs to 75 residues: Large ribosomal subunit protein bL31 (75 aa).

It belongs to the bacterial ribosomal protein bL31 family. Type A subfamily. In terms of assembly, part of the 50S ribosomal subunit.

In terms of biological role, binds the 23S rRNA. The polypeptide is Large ribosomal subunit protein bL31 (Sphingopyxis alaskensis (strain DSM 13593 / LMG 18877 / RB2256) (Sphingomonas alaskensis)).